Reading from the N-terminus, the 224-residue chain is UPF0758 protein Pfl01_5539 (224 aa).

The MPN domain occupies 102–224; the sequence is ALENPQVVRD…PLSMAECGWM (123 aa). 3 residues coordinate Zn(2+): H173, H175, and D186. The JAMM motif motif lies at 173 to 186; sequence HNHPSGNSDPSQAD.

Belongs to the UPF0758 family.

The chain is UPF0758 protein Pfl01_5539 from Pseudomonas fluorescens (strain Pf0-1).